A 307-amino-acid polypeptide reads, in one-letter code: Protease HtpX homolog (307 aa).

Residues 16–36 (LFMGVGYLIGGAAGAMIALVV) traverse the membrane as a helical segment. H130 contacts Zn(2+). Residue E131 is part of the active site. H134 contacts Zn(2+). The next 2 helical transmembrane spans lie at 145 to 165 (ITAT…FFGG) and 172 to 192 (GPGI…AMLV). E201 lines the Zn(2+) pocket. A disordered region spans residues 278–307 (AGQSGSATPDPAPAPRGPWNGGAPRRGPWG).

Belongs to the peptidase M48B family. Zn(2+) serves as cofactor.

Its subcellular location is the cell inner membrane. This is Protease HtpX homolog from Nitrobacter hamburgensis (strain DSM 10229 / NCIMB 13809 / X14).